Here is a 193-residue protein sequence, read N- to C-terminus: Potassium-transporting ATPase KdpC subunit (193 aa).

Residues 7 to 27 form a helical membrane-spanning segment; that stretch reads PMIVIFAVLAALTGLAYPAVM.

This sequence belongs to the KdpC family. As to quaternary structure, the system is composed of three essential subunits: KdpA, KdpB and KdpC.

It localises to the cell inner membrane. In terms of biological role, part of the high-affinity ATP-driven potassium transport (or Kdp) system, which catalyzes the hydrolysis of ATP coupled with the electrogenic transport of potassium into the cytoplasm. This subunit acts as a catalytic chaperone that increases the ATP-binding affinity of the ATP-hydrolyzing subunit KdpB by the formation of a transient KdpB/KdpC/ATP ternary complex. The protein is Potassium-transporting ATPase KdpC subunit of Paraburkholderia phymatum (strain DSM 17167 / CIP 108236 / LMG 21445 / STM815) (Burkholderia phymatum).